Here is a 102-residue protein sequence, read N- to C-terminus: Small ribosomal subunit protein uS10 (102 aa).

The protein belongs to the universal ribosomal protein uS10 family. As to quaternary structure, part of the 30S ribosomal subunit.

In terms of biological role, involved in the binding of tRNA to the ribosomes. The chain is Small ribosomal subunit protein uS10 from Acidithiobacillus ferrooxidans (strain ATCC 53993 / BNL-5-31) (Leptospirillum ferrooxidans (ATCC 53993)).